The sequence spans 512 residues: D-alanine--D-alanyl carrier protein ligase (512 aa).

152 to 153 (TS) is an ATP binding site. D-alanine is bound at residue Asp199. 294–299 (NAYGPT) is an ATP binding site. Val303 is a D-alanine binding site. ATP-binding positions include Asp385, 397–400 (YGGR), and Lys499. Lys499 is a binding site for D-alanine.

This sequence belongs to the ATP-dependent AMP-binding enzyme family. DltA subfamily.

It localises to the cytoplasm. It catalyses the reaction holo-[D-alanyl-carrier protein] + D-alanine + ATP = D-alanyl-[D-alanyl-carrier protein] + AMP + diphosphate. It participates in cell wall biogenesis; lipoteichoic acid biosynthesis. Its function is as follows. Catalyzes the first step in the D-alanylation of lipoteichoic acid (LTA), the activation of D-alanine and its transfer onto the D-alanyl carrier protein (Dcp) DltC. In an ATP-dependent two-step reaction, forms a high energy D-alanyl-AMP intermediate, followed by transfer of the D-alanyl residue as a thiol ester to the phosphopantheinyl prosthetic group of the Dcp. D-alanylation of LTA plays an important role in modulating the properties of the cell wall in Gram-positive bacteria, influencing the net charge of the cell wall. The protein is D-alanine--D-alanyl carrier protein ligase of Streptococcus pyogenes serotype M4 (strain MGAS10750).